The chain runs to 1189 residues: Pumilio homolog 1 (1189 aa).

Disordered stretches follow at residues 24 to 65 (QHAQ…SSPV), 233 to 288 (SCLR…QNGI), 491 to 525 (QQTTQQTQQGQQQVLRGGASQRPLTPNQNQQGQQT), 614 to 652 (AGTTNGPFRPLGTQQPQPQPQQQPTNNLASSSFYGNNSL), and 743 to 774 (GPVGMPLPSQGPGHSQTPPPSLSSHGSSSSLN). The span at 45 to 58 (QAQPQPAANQALAA) shows a compositional bias: low complexity. Positions 250-277 (NDKGDKKNKGTFDGDKLGDLKEEGDVMD) are enriched in basic and acidic residues. Residues 491–503 (QQTTQQTQQGQQQ) are compositionally biased toward low complexity. The segment covering 512–525 (RPLTPNQNQQGQQT) has biased composition (polar residues). Composition is skewed to low complexity over residues 627-652 (QQPQPQPQQQPTNNLASSSFYGNNSL) and 764-774 (LSSHGSSSSLN). The PUM-HD domain occupies 829-1171 (GRSRLLEDFR…HILAKLEKYY (343 aa)). Pumilio repeat units lie at residues 849-884 (EIAGHIMEFSQDQHGSRFIQLKLERATPAERQLVFN), 885-920 (EILQAAYQLMVDVFGNYVIQKFFEFGSLEQKLALAE), 921-958 (RIRGHVLSLALQMYGCRVIQKALEFIPPDQQVINEMVR), 959-994 (ELDGHVLKCVKDQNGNHVVQKCIECVQPQSLQFIID), 995-1030 (AFKGQVFALSTHPYGCRVIQRILEHCLPEQTLPILE), 1031-1066 (ELHQHTEQLVQDQYGNYVIQHVLEHGRPEDKSKIVA), 1067-1102 (EIRGNVLVLSQHKFASNVVEKCVTHASRTERAMLID), and 1106-1145 (TMNDGPHSALYTMMKDQYANYVVQKMIDVAEPAQRKIVMH). The interval 864–868 (SRFIQ) is adenine-nucleotide binding in RNA target. The uracil-nucleotide binding in RNA target stretch occupies residues 900–904 (NYVIQ). The adenine-nucleotide binding in RNA target stretch occupies residues 936 to 940 (CRVIQ). The segment at 974 to 978 (NHVVQ) is non-specific-nucleotide binding in RNA target. Residues 1010-1014 (CRVIQ) are adenine-nucleotide binding in RNA target. The uracil-nucleotide binding in RNA target stretch occupies residues 1046–1050 (NYVIQ). 2 guanine-nucleotide binding in RNA target regions span residues 1082 to 1086 (SNVVE) and 1083 to 1086 (NVVE). A uracil-nucleotide binding in RNA target region spans residues 1125–1129 (NYVVQ).

Detected in embryonic male and female gonads, heart, liver and muscle. Detected in adult brain, testis, ovary, heart, lung, spleen, kidney and muscle.

It localises to the cytoplasm. It is found in the P-body. The protein resides in the cytoplasmic granule. Sequence-specific RNA-binding protein that acts as a post-transcriptional repressor by binding the 3'-UTR of mRNA targets. Binds to an RNA consensus sequence, the Pumilio Response Element (PRE), 5'-UGUANAUA-3', that is related to the Nanos Response Element (NRE). Mediates post-transcriptional repression of transcripts via different mechanisms: acts via direct recruitment of the CCR4-POP2-NOT deadenylase leading to translational inhibition and mRNA degradation. Also mediates deadenylation-independent repression by promoting accessibility of miRNAs. This is Pumilio homolog 1 (PUM1) from Gallus gallus (Chicken).